The following is a 328-amino-acid chain: Transcriptional regulator protein Pur-beta-B (328 aa).

Disordered regions lie at residues 1–35 (MADG…ELAS), 100–124 (SPEQ…RALK), and 289–328 (QERQ…VDDD). Position 2 is an N-acetylalanine (Ala-2). Positions 9–18 (ERGGSSGGPS) are enriched in gly residues. Residues 24-35 (MSREQETQELAS) are compositionally biased toward basic and acidic residues. The interval 27–260 (EQETQELASK…LRVSEVKPSY (234 aa)) is DNA-binding. The segment covering 289-303 (QERQRDKMYDRRGPG) has biased composition (basic and acidic residues). The segment covering 304–317 (ERGGSLGPGAGGGG) has biased composition (gly residues). The segment covering 318 to 328 (DDSETEDVDDD) has biased composition (acidic residues).

It belongs to the PUR DNA-binding protein family.

It is found in the nucleus. In terms of biological role, transcriptional regulator which can act as an activator or a repressor. This chain is Transcriptional regulator protein Pur-beta-B (purb-b), found in Xenopus laevis (African clawed frog).